We begin with the raw amino-acid sequence, 394 residues long: 4-O-methyl-glucuronoyl methylesterase (394 aa).

A signal peptide spans 1–18; sequence MVHLTPALLLASAAFAAA. Intrachain disulfides connect Cys29–Cys63, Cys210–Cys345, and Cys242–Cys317. The short motif at 209–214 is the GXSYXG catalytic site motif element; that stretch reads GCSRNG. Residue Ser211 is the Nucleophile of the active site. Positions 215, 257, 265, and 308 each coordinate substrate. The Proton donor/acceptor role is filled by His344.

Belongs to the carbohydrate esterase 15 (CE15) family.

The protein localises to the secreted. It catalyses the reaction a 4-O-methyl-alpha-D-glucuronosyl ester derivative + H2O = 4-O-methyl-alpha-D-glucuronate derivative + an alcohol + H(+). In terms of biological role, glucuronoyl esterase which may play a significant role in biomass degradation, as it is considered to disconnect hemicellulose from lignin through the hydrolysis of the ester bond between 4-O-methyl-D-glucuronic acid residues of glucuronoxylans and aromatic alcohols of lignin. The protein is 4-O-methyl-glucuronoyl methylesterase of Neurospora crassa (strain ATCC 24698 / 74-OR23-1A / CBS 708.71 / DSM 1257 / FGSC 987).